A 553-amino-acid chain; its full sequence is Solute carrier family 45 member 3 (553 aa).

A run of 11 helical transmembrane segments spans residues 19 to 39, 52 to 72, 88 to 108, 120 to 140, 161 to 181, 198 to 218, 275 to 295, 323 to 343, 353 to 373, 382 to 402, and 522 to 542; these read LLIN…ITYV, FMTM…PLLG, FIWA…RAGW, LELA…QVCF, YSVY…LPAI, CLFG…LLVA, FVAE…YTDF, MGSL…LVMD, AVYL…CLSH, AALT…LASL, and AYMV…TQVV.

This sequence belongs to the glycoside-pentoside-hexuronide (GPH) cation symporter transporter (TC 2.A.2) family.

It is found in the membrane. It catalyses the reaction sucrose(out) + H(+)(out) = sucrose(in) + H(+)(in). Its function is as follows. Proton-associated sucrose transporter. May be able to transport also glucose and fructose. The protein is Solute carrier family 45 member 3 (SLC45A3) of Macaca fascicularis (Crab-eating macaque).